A 556-amino-acid chain; its full sequence is Adenine deaminase (556 aa).

The protein belongs to the metallo-dependent hydrolases superfamily. Adenine deaminase family. It depends on Mn(2+) as a cofactor.

The enzyme catalyses adenine + H2O + H(+) = hypoxanthine + NH4(+). The chain is Adenine deaminase from Archaeoglobus fulgidus (strain ATCC 49558 / DSM 4304 / JCM 9628 / NBRC 100126 / VC-16).